Here is a 506-residue protein sequence, read N- to C-terminus: Trans-cinnamate 4-monooxygenase (506 aa).

Residues 3-23 traverse the membrane as a helical segment; that stretch reads DFVLLEKALLGLFIATIVAIT. (E)-cinnamate-binding positions include 214 to 219 and Ala-307; that span reads RSRLAQ. Cys-448 serves as a coordination point for heme.

This sequence belongs to the cytochrome P450 family. Heme is required as a cofactor.

Its subcellular location is the membrane. The catalysed reaction is (E)-cinnamate + reduced [NADPH--hemoprotein reductase] + O2 = (E)-4-coumarate + oxidized [NADPH--hemoprotein reductase] + H2O + H(+). It functions in the pathway phenylpropanoid metabolism; trans-4-coumarate biosynthesis; trans-4-coumarate from trans-cinnamate: step 1/1. Functionally, catalyzes the first oxidative step of the phenylpropanoid pathway in higher plants by transforming trans-cinnamate into p-coumarate. The compounds formed by this pathway are essential components for lignification, pollination, and defense against ultraviolet light, predators and pathogens. This Petroselinum crispum (Parsley) protein is Trans-cinnamate 4-monooxygenase (CYP73A10).